A 132-amino-acid polypeptide reads, in one-letter code: Small ribosomal subunit protein uS11 (132 aa).

Belongs to the universal ribosomal protein uS11 family. Part of the 30S ribosomal subunit. Interacts with proteins S7 and S18. Binds to IF-3.

Located on the platform of the 30S subunit, it bridges several disparate RNA helices of the 16S rRNA. Forms part of the Shine-Dalgarno cleft in the 70S ribosome. The protein is Small ribosomal subunit protein uS11 of Oenococcus oeni (strain ATCC BAA-331 / PSU-1).